Here is a 663-residue protein sequence, read N- to C-terminus: MTNTGETKVIESHGTIKKIDSLSTMPYCGVETDENAVVEEKITLESGKSWSPKHYELLHERIERLIDEKQQFFSLEFFPPRFVNGVPNFLERVERLSEGGSVFVDMTWHMGSDPANVDKVTSSSSIAASMLDYCGVDTMLHMTCVQYNKADTLKHLEQAKAMGLRSILALRGDLPPGTELEDTHQFRALDMIRWIREEYGNYFSIGCAGYPLGHPQAPSYKADLMYLKAKCDAGANFVITQLFFEAETFEKFVRDCREIGITQPIIPGIMPIMGYESIKRIAKLSQLEIPQHILDDLEPIKHDDDAVQKYGTERCIEMCRRLLDNGTAPSIHLYTMNREGSIREILKSLGLWKLEGDRVFPWKNRSQHPIRCLESVRPIYWSFRPRSYITRTRDWDQFPNGRWGNSSSPAFGDVSSYYLSNLTTVRNADDRLAMFGANIESFEDVKRVFINYITQAPNADGVKVTVLPWTEAETGVQPETSLISEQLVWCNENGILTVNSQPSVNGAPSTDPLVGWGKPGGYCYQKAYLECFMTAELSDKLIQIIEREFPVRVNYHAINKDSTFDKTNSEETTPIAVTWGVFPGSEIAQPTVVDPLSFRAWRDEAYQMWMAQWGDFYPKESKSYGVIKAVHDEFRLVTLVDNDFQKPSVLFDVLQKALDELKK.

The active-site Proton donor/acceptor is the E76. NAD(+) contacts are provided by residues 76 to 81 (EFFPPR) and 107 to 108 (TW). T107 carries the phosphothreonine modification. FAD is bound by residues 107-108 (TW), H141, 171-173 (RGD), 187-188 (RA), Y210, 214-217 (HPQA), D223, and K230. Position 173 (D173) interacts with substrate. The substrate site is built by Q241, Y334, and R338. Phosphoserine is present on S408. Phosphothreonine is present on T465. S-adenosyl-L-methionine-binding positions include 477 to 480 (QPET), 497 to 501 (TVNSQ), T578, and T591.

Belongs to the methylenetetrahydrofolate reductase family. The cofactor is FAD.

The catalysed reaction is (6S)-5-methyl-5,6,7,8-tetrahydrofolate + NADP(+) = (6R)-5,10-methylene-5,6,7,8-tetrahydrofolate + NADPH + H(+). It functions in the pathway one-carbon metabolism; tetrahydrofolate interconversion. The chain is Probable methylenetetrahydrofolate reductase (NADPH) from Caenorhabditis elegans.